The sequence spans 686 residues: Methionine--tRNA ligase (686 aa).

The short motif at 15 to 25 (PYTNGPIHIGH) is the 'HIGH' region element. Zn(2+)-binding residues include cysteine 147, cysteine 150, cysteine 160, and cysteine 163. The short motif at 336-340 (KLSTS) is the 'KMSKS' region element. Threonine 339 is an ATP binding site. One can recognise a tRNA-binding domain in the interval 584-686 (DFAKMDLRVG…AGVGNGEGIN (103 aa)).

It belongs to the class-I aminoacyl-tRNA synthetase family. MetG type 1 subfamily. Homodimer. It depends on Zn(2+) as a cofactor.

The protein localises to the cytoplasm. The enzyme catalyses tRNA(Met) + L-methionine + ATP = L-methionyl-tRNA(Met) + AMP + diphosphate. Functionally, is required not only for elongation of protein synthesis but also for the initiation of all mRNA translation through initiator tRNA(fMet) aminoacylation. This chain is Methionine--tRNA ligase, found in Flavobacterium psychrophilum (strain ATCC 49511 / DSM 21280 / CIP 103535 / JIP02/86).